The chain runs to 132 residues: Fatty acid-binding protein, adipocyte (132 aa).

The residue at position 2 (cysteine 2) is an N-acetylcysteine. Serine 13 bears the Phosphoserine mark. A Phosphotyrosine; by Tyr-kinases modification is found at tyrosine 20. Positions 22–32 (KEVGVGFATRK) match the Nuclear localization signal motif. 127 to 129 (RVY) provides a ligand contact to a fatty acid.

This sequence belongs to the calycin superfamily. Fatty-acid binding protein (FABP) family. As to quaternary structure, monomer. Homodimer. Interacts with PPARG.

It is found in the cytoplasm. The protein localises to the nucleus. Functionally, lipid transport protein in adipocytes. Binds both long chain fatty acids and retinoic acid. Delivers long-chain fatty acids and retinoic acid to their cognate receptors in the nucleus. FABPs are important elements related to the hibernating state in mammals. The polypeptide is Fatty acid-binding protein, adipocyte (FABP4) (Ictidomys tridecemlineatus (Thirteen-lined ground squirrel)).